Consider the following 36-residue polypeptide: Kappa-theraphotoxin-Pg1a (36 aa).

Cystine bridges form between C4–C19, C11–C24, and C18–C31.

Belongs to the neurotoxin 10 (Hwtx-1) family. 44 (Jztx-4) subfamily. In terms of tissue distribution, expressed by the venom gland.

The protein localises to the secreted. Functionally, gating modifier of Kv2.1/KCNB1 (IC(50)=5.1 nM), Kv2.2/KCNB2 and Kv4.3/KCND3 channels (IC(50)=39 nM). Acts by shifting the channel activation to more depolarized potentials by stabilizing the resting conformation of the voltage sensor. It completely inhibits opening of the Kv2.1/KCNB1 channel at negative membrane voltages and dramatically shifts channel activation to positive voltages. May act by partitioning into lipid membranes and then by binding the voltage sensor paddle of the channel from a place within the membrane. This Chilobrachys guangxiensis (Chinese earth tiger tarantula) protein is Kappa-theraphotoxin-Pg1a.